The chain runs to 564 residues: Protein glycosylation K (564 aa).

Over 1-15 (MLKKLFFILSKEDKN) the chain is Cytoplasmic. Residues 16–38 (FLFFLLVFSVFISFIETFAISLV) traverse the membrane as a helical segment. The ABC transmembrane type-1 domain maps to 17–319 (LFFLLVFSVF…IITSYHDLLY (303 aa)). The Extracellular portion of the chain corresponds to 39–76 (MPFITLASDFSYFDRNKYLISLKEYLNIPVFEIIVYFG). The tract at residues 46-67 (SDFSYFDRNKYLISLKEYLNIP) is important for stimulation of ATPase activity by lipid-linked oligosaccharides and subsequent translocation of lipid-linked oligosaccharides. Residues 77 to 98 (VGLIVFYVFRALLNAYYFHLLA) form a helical membrane-spanning segment. The Cytoplasmic segment spans residues 99–149 (RFSKGRYHAIAYKVFSKFLNINYEKFTQKNQSEILKSITGEVYNLSTMISS). The chain crosses the membrane as a helical span at residues 150–170 (FLLLMSEIFVVLLLYALMLLI). Over 171 to 173 (NYK) the chain is Extracellular. Residues 174–197 (ITLFLSIFMVLNAFILVKILSPII) form a helical membrane-spanning segment. The Cytoplasmic portion of the chain corresponds to 198-254 (KKAGVRREEAMKNFFEILNTNLNNFKFIKLKTKEDGVLSLFKAQSEAFSKANITNES). A helical transmembrane segment spans residues 255–276 (VAAVPRIYLEGIGFCVLVFIVV). At 277–292 (FLVLKNESDISGILST) the chain is on the extracellular side. The helical transmembrane segment at 293-314 (ISIFVLALYRLMPSANRIITSY) threads the bilayer. The Cytoplasmic segment spans residues 315-564 (HDLLYYHSSL…LEHGKLKEEK (250 aa)). One can recognise an ABC transporter domain in the interval 349 to 564 (LKICNLSFGY…LEHGKLKEEK (216 aa)). Position 382 to 389 (382 to 389 (GESGCGKS)) interacts with ATP.

It belongs to the ABC transporter superfamily. Homodimer; domain-swapped. Helices that arise in transmembrane regions 4 and 5 from one subunit cross over and contact the nucleotide-binding domain from the other subunit.

The protein localises to the cell inner membrane. It carries out the reaction ATP + H2O + lipopolysaccharideSide 1 = ADP + phosphate + lipopolysaccharideSide 2.. It participates in protein modification; protein glycosylation. Mediates the ATP-dependent translocation of the undecaprenylpyrophosphate-linked heptasaccharide intermediate across the cell membrane; this is an essential step during the N-linked protein glycosylation pathway. Transport across the membrane is effected via ATP-driven conformation changes. Most likely, only the polar and charged part of the glycolipid enter the substrate-binding cavity, and the lipid tail remains exposed to the membrane lipids during the transmembrane flipping process. The chain is Protein glycosylation K (pglK) from Campylobacter jejuni subsp. jejuni serotype O:2 (strain ATCC 700819 / NCTC 11168).